Consider the following 239-residue polypeptide: UPF0173 metal-dependent hydrolase DVU_3308 (239 aa).

It belongs to the UPF0173 family.

This is UPF0173 metal-dependent hydrolase DVU_3308 from Nitratidesulfovibrio vulgaris (strain ATCC 29579 / DSM 644 / CCUG 34227 / NCIMB 8303 / VKM B-1760 / Hildenborough) (Desulfovibrio vulgaris).